The following is a 725-amino-acid chain: Putative oligopeptide transporter YGL114W (725 aa).

9 consecutive transmembrane segments (helical) span residues 28–48, 134–154, 254–274, 353–373, 449–469, 472–492, 564–584, 644–664, and 697–717; these read ATIA…QFGL, FREL…FAVP, IIIL…SYFV, WILW…FIVV, ISGC…LFGI, IPLY…ILGI, FCAQ…MYLC, YGYG…GIFN, and IVFS…NMLF.

This sequence belongs to the oligopeptide OPT transporter family.

The protein resides in the membrane. This is Putative oligopeptide transporter YGL114W from Saccharomyces cerevisiae (strain ATCC 204508 / S288c) (Baker's yeast).